Here is a 150-residue protein sequence, read N- to C-terminus: MLGAALRRCAVAATTRAGPRGLLHSARTPGPAAAIQSVRCXSHGSQETDEEFDARWVTYFNKPDIDAWELRKGINTLVTYDMVPEPKIIDAALRACRRLNDFASTVRILEAVKDKAGPHKEIYPYVIQELRPTLNELGISTPEELGLDKV.

The N-terminal 41 residues, 1–41, are a transit peptide targeting the mitochondrion; sequence MLGAALRRCAVAATTRAGPRGLLHSARTPGPAAAIQSVRCX. The SIFI-degron signature appears at 2–17; it reads LGAALRRCAVAATTRA. 2 positions are modified to N6-acetyllysine: Lys87 and Lys113. Thr141 bears the Phosphothreonine mark.

It belongs to the cytochrome c oxidase subunit 5A family. Component of the cytochrome c oxidase (complex IV, CIV), a multisubunit enzyme composed of 14 subunits. The complex is composed of a catalytic core of 3 subunits MT-CO1, MT-CO2 and MT-CO3, encoded in the mitochondrial DNA, and 11 supernumerary subunits COX4I, COX5A, COX5B, COX6A, COX6B, COX6C, COX7A, COX7B, COX7C, COX8 and NDUFA4, which are encoded in the nuclear genome. The complex exists as a monomer or a dimer and forms supercomplexes (SCs) in the inner mitochondrial membrane with NADH-ubiquinone oxidoreductase (complex I, CI) and ubiquinol-cytochrome c oxidoreductase (cytochrome b-c1 complex, complex III, CIII), resulting in different assemblies (supercomplex SCI(1)III(2)IV(1) and megacomplex MCI(2)III(2)IV(2)). Interacts with AFG1L. Interacts with RAB5IF. In terms of processing, in response to mitochondrial stress, the precursor protein is ubiquitinated by the SIFI complex in the cytoplasm before mitochondrial import, leading to its degradation. Within the SIFI complex, UBR4 initiates ubiquitin chain that are further elongated or branched by KCMF1.

The protein resides in the mitochondrion inner membrane. It participates in energy metabolism; oxidative phosphorylation. In terms of biological role, component of the cytochrome c oxidase, the last enzyme in the mitochondrial electron transport chain which drives oxidative phosphorylation. The respiratory chain contains 3 multisubunit complexes succinate dehydrogenase (complex II, CII), ubiquinol-cytochrome c oxidoreductase (cytochrome b-c1 complex, complex III, CIII) and cytochrome c oxidase (complex IV, CIV), that cooperate to transfer electrons derived from NADH and succinate to molecular oxygen, creating an electrochemical gradient over the inner membrane that drives transmembrane transport and the ATP synthase. Cytochrome c oxidase is the component of the respiratory chain that catalyzes the reduction of oxygen to water. Electrons originating from reduced cytochrome c in the intermembrane space (IMS) are transferred via the dinuclear copper A center (CU(A)) of subunit 2 and heme A of subunit 1 to the active site in subunit 1, a binuclear center (BNC) formed by heme A3 and copper B (CU(B)). The BNC reduces molecular oxygen to 2 water molecules using 4 electrons from cytochrome c in the IMS and 4 protons from the mitochondrial matrix. This chain is Cytochrome c oxidase subunit 5A, mitochondrial (COX5A), found in Pan paniscus (Pygmy chimpanzee).